We begin with the raw amino-acid sequence, 116 residues long: U30-theraphotoxin-Cg1a (116 aa).

A signal peptide spans 1 to 17 (MKLCVLTIASLLVTVTS). Positions 18–53 (LETQKEIAEGSELTREETPSLVEHKEDEAAAASEKR) are excised as a propeptide. The interval 24–46 (IAEGSELTREETPSLVEHKEDEA) is disordered. 4 disulfide bridges follow: Cys-55–Cys-69, Cys-62–Cys-75, Cys-66–Cys-112, and Cys-68–Cys-88.

The protein belongs to the neurotoxin 03 (Tx2) family. 02 subfamily. HNTX-XV sub-subfamily. In terms of tissue distribution, expressed by the venom gland.

The protein resides in the secreted. Probable ion channel inhibitor. This chain is U30-theraphotoxin-Cg1a, found in Chilobrachys guangxiensis (Chinese earth tiger tarantula).